A 177-amino-acid chain; its full sequence is 3-hydroxyanthranilate 3,4-dioxygenase (177 aa).

O2 is bound at residue arginine 47. The Fe cation site is built by histidine 51, glutamate 57, and histidine 95. Glutamate 57 contributes to the substrate binding site. Substrate contacts are provided by arginine 99 and glutamate 110. Fe cation-binding residues include cysteine 125, cysteine 128, cysteine 162, and cysteine 165.

It belongs to the 3-HAO family. As to quaternary structure, homodimer. The cofactor is Fe(2+).

The catalysed reaction is 3-hydroxyanthranilate + O2 = (2Z,4Z)-2-amino-3-carboxymuconate 6-semialdehyde. The protein operates within cofactor biosynthesis; NAD(+) biosynthesis; quinolinate from L-kynurenine: step 3/3. Its function is as follows. Catalyzes the oxidative ring opening of 3-hydroxyanthranilate to 2-amino-3-carboxymuconate semialdehyde, which spontaneously cyclizes to quinolinate. The polypeptide is 3-hydroxyanthranilate 3,4-dioxygenase (Burkholderia cenocepacia (strain ATCC BAA-245 / DSM 16553 / LMG 16656 / NCTC 13227 / J2315 / CF5610) (Burkholderia cepacia (strain J2315))).